A 224-amino-acid polypeptide reads, in one-letter code: MDQKRAVILLSGGLDSATVVAMAQAQGYSCYTMSFDYGQRHRAELNAAARVARDMGVVEHKVIGLNLNGIGGSALTDSSIDVPEAPSEGIPVTYVPARNTVFLSLALGWAEVLNARDIFIGVNAVDYSGYPDCRPEFVESFERMANLATKAGVEGQGFRILAPLQNLSKADIVKAGVGLGVDYSLTVSCYQADDDGRACGKCDSCRLRAEGFQAAGIADPTRYF.

ATP is bound at residue 10–20 (LSGGLDSATVV). Zn(2+) is bound by residues Cys189, Cys199, Cys202, and Cys205.

Belongs to the QueC family. The cofactor is Zn(2+).

It catalyses the reaction 7-carboxy-7-deazaguanine + NH4(+) + ATP = 7-cyano-7-deazaguanine + ADP + phosphate + H2O + H(+). It functions in the pathway purine metabolism; 7-cyano-7-deazaguanine biosynthesis. Functionally, catalyzes the ATP-dependent conversion of 7-carboxy-7-deazaguanine (CDG) to 7-cyano-7-deazaguanine (preQ(0)). The chain is 7-cyano-7-deazaguanine synthase from Pseudomonas fluorescens (strain SBW25).